Here is a 181-residue protein sequence, read N- to C-terminus: NADH-quinone oxidoreductase subunit B 2 (181 aa).

4 residues coordinate [4Fe-4S] cluster: Cys-44, Cys-45, Cys-110, and Cys-139.

This sequence belongs to the complex I 20 kDa subunit family. As to quaternary structure, NDH-1 is composed of 14 different subunits. Subunits NuoB, C, D, E, F, and G constitute the peripheral sector of the complex. [4Fe-4S] cluster serves as cofactor.

The protein resides in the cell inner membrane. The catalysed reaction is a quinone + NADH + 5 H(+)(in) = a quinol + NAD(+) + 4 H(+)(out). Functionally, NDH-1 shuttles electrons from NADH, via FMN and iron-sulfur (Fe-S) centers, to quinones in the respiratory chain. The immediate electron acceptor for the enzyme in this species is believed to be a menaquinone. Couples the redox reaction to proton translocation (for every two electrons transferred, four hydrogen ions are translocated across the cytoplasmic membrane), and thus conserves the redox energy in a proton gradient. This is NADH-quinone oxidoreductase subunit B 2 from Cytophaga hutchinsonii (strain ATCC 33406 / DSM 1761 / CIP 103989 / NBRC 15051 / NCIMB 9469 / D465).